Reading from the N-terminus, the 232-residue chain is Putative homeobox protein NANOG2 (232 aa).

Residues 1–39 (MDLPIQDSHDSSTSPKGKQPTTAEKSATKKEDKVPVKKQ) form a disordered region. Residues 11 to 25 (SSTSPKGKQPTTAEK) show a composition bias toward polar residues. The segment covering 26–35 (SATKKEDKVP) has biased composition (basic and acidic residues). Tandem repeats lie at residues 123 to 127 (WSNQT), 128 to 132 (WNNST), 133 to 137 (WSNQT), 143 to 147 (WSNHS), 148 to 152 (WNTQT), 153 to 157 (WCTQS), 158 to 162 (WNNQA), and 163 to 167 (WNSPF). The segment at 123–167 (WSNQTWNNSTWSNQTQNIQSWSNHSWNTQTWCTQSWNNQAWNSPF) is 8 X repeats starting with a Trp in each unit. The interval 123–167 (WSNQTWNNSTWSNQTQNIQSWSNHSWNTQTWCTQSWNNQAWNSPF) is sufficient for transactivation activity. The interval 168-232 (YNCGEESLQS…YSTNMXXEDV (65 aa)) is sufficient for strong transactivation activity.

The protein belongs to the Nanog homeobox family.

The protein localises to the nucleus. Its function is as follows. Probable transcriptional regulator. This is Putative homeobox protein NANOG2 (NANOGP1) from Pan paniscus (Pygmy chimpanzee).